The primary structure comprises 305 residues: Coiled-coil domain-containing protein 69 (305 aa).

The N-myristoyl glycine moiety is linked to residue glycine 2. Positions 13-41 (LRKKKRQKAHQEGLTSKELNDLNAKSQEP) are disordered. 2 coiled-coil regions span residues 42 to 167 (NELL…SVLS) and 216 to 278 (MERN…KEQN).

It belongs to the CCDC69 family.

The protein localises to the cytoplasm. It is found in the cytoskeleton. It localises to the spindle. Its subcellular location is the midbody. Its function is as follows. May act as a scaffold to regulate the recruitment and assembly of spindle midzone components. This Xenopus tropicalis (Western clawed frog) protein is Coiled-coil domain-containing protein 69 (ccdc69).